Here is a 232-residue protein sequence, read N- to C-terminus: 5'-methylthioadenosine/S-adenosylhomocysteine nucleosidase (232 aa).

The Proton acceptor role is filled by Glu12. Residues Gly78, Ile152, and 173-174 contribute to the substrate site; that span reads ME. Asp197 functions as the Proton donor in the catalytic mechanism.

The protein belongs to the PNP/UDP phosphorylase family. MtnN subfamily. As to quaternary structure, homodimer.

The enzyme catalyses S-adenosyl-L-homocysteine + H2O = S-(5-deoxy-D-ribos-5-yl)-L-homocysteine + adenine. It catalyses the reaction S-methyl-5'-thioadenosine + H2O = 5-(methylsulfanyl)-D-ribose + adenine. The catalysed reaction is 5'-deoxyadenosine + H2O = 5-deoxy-D-ribose + adenine. It participates in amino-acid biosynthesis; L-methionine biosynthesis via salvage pathway; S-methyl-5-thio-alpha-D-ribose 1-phosphate from S-methyl-5'-thioadenosine (hydrolase route): step 1/2. In terms of biological role, catalyzes the irreversible cleavage of the glycosidic bond in both 5'-methylthioadenosine (MTA) and S-adenosylhomocysteine (SAH/AdoHcy) to adenine and the corresponding thioribose, 5'-methylthioribose and S-ribosylhomocysteine, respectively. Also cleaves 5'-deoxyadenosine, a toxic by-product of radical S-adenosylmethionine (SAM) enzymes, into 5-deoxyribose and adenine. Thus, is required for in vivo function of the radical SAM enzymes biotin synthase and lipoic acid synthase, that are inhibited by 5'-deoxyadenosine accumulation. This is 5'-methylthioadenosine/S-adenosylhomocysteine nucleosidase from Edwardsiella ictaluri (strain 93-146).